The chain runs to 408 residues: UPF0761 membrane protein NMCC_0461 (408 aa).

A run of 6 helical transmembrane segments spans residues 43–63 (LLAL…FPVF), 100–120 (LTAI…RTID), 139–159 (FLVY…GISF), 176–196 (WSGA…LWGL), 210–230 (AFVG…LFTW), and 248–268 (VPFF…GAVL).

This sequence belongs to the UPF0761 family.

It localises to the cell inner membrane. In Neisseria meningitidis serogroup C (strain 053442), this protein is UPF0761 membrane protein NMCC_0461.